Here is a 151-residue protein sequence, read N- to C-terminus: tRNA-specific adenosine deaminase (151 aa).

One can recognise a CMP/dCMP-type deaminase domain in the interval 4-122 (NRDSYWMKIA…PFLKKIFINL (119 aa)). Histidine 55 is a Zn(2+) binding site. Residue glutamate 57 is the Proton donor of the active site. Positions 85 and 88 each coordinate Zn(2+).

This sequence belongs to the cytidine and deoxycytidylate deaminase family. As to quaternary structure, homodimer. Zn(2+) is required as a cofactor.

It catalyses the reaction adenosine(34) in tRNA + H2O + H(+) = inosine(34) in tRNA + NH4(+). In terms of biological role, catalyzes the deamination of adenosine to inosine at the wobble position 34 of tRNA(Arg2). The polypeptide is tRNA-specific adenosine deaminase (Buchnera aphidicola subsp. Schizaphis graminum (strain Sg)).